The primary structure comprises 126 residues: CD59 glycoprotein (126 aa).

Residues methionine 1–serine 25 form the signal peptide. In terms of domain architecture, UPAR/Ly6 spans leucine 26–serine 106. Intrachain disulfides connect cysteine 28-cysteine 51, cysteine 31-cysteine 38, cysteine 44-cysteine 64, cysteine 70-cysteine 88, and cysteine 89-cysteine 94. Asparagine 43 carries N-linked (GlcNAc...) asparagine glycosylation. Residue asparagine 100 is the site of GPI-anchor amidated asparagine attachment. The propeptide at glycine 101–proline 126 is removed in mature form.

As to quaternary structure, interacts with T-cell surface antigen CD2. Post-translationally, N- and O-glycosylated.

It localises to the cell membrane. The protein resides in the secreted. Its function is as follows. Potent inhibitor of the complement membrane attack complex (MAC) action, which protects self-cells from damage during complement activation. Acts by binding to the beta-haipins of C8 (C8A and C8B) components of the assembling MAC, forming an intermolecular beta-sheet that prevents incorporation of the multiple copies of C9 required for complete formation of the osmolytic pore. This chain is CD59 glycoprotein, found in Papio sp. (Baboon).